The chain runs to 118 residues: Large ribosomal subunit protein bL20 (118 aa).

Belongs to the bacterial ribosomal protein bL20 family.

In terms of biological role, binds directly to 23S ribosomal RNA and is necessary for the in vitro assembly process of the 50S ribosomal subunit. It is not involved in the protein synthesizing functions of that subunit. This is Large ribosomal subunit protein bL20 (rplT) from Buchnera aphidicola subsp. Acyrthosiphon pisum (strain APS) (Acyrthosiphon pisum symbiotic bacterium).